Here is a 608-residue protein sequence, read N- to C-terminus: Afamin (608 aa).

An N-terminal signal peptide occupies residues 1–21 (MRHLKLTGFIFFLLSLTESLA). 3 Albumin domains span residues 22-210 (LPTK…APIT), 211-403 (QYLK…KFNE), and 404-599 (TTER…KTGD). A glycan (N-linked (GlcNAc...) asparagine) is linked at Asn33. 10 disulfides stabilise this stretch: Cys77–Cys86, Cys99–Cys114, Cys113–Cys124, Cys148–Cys193, Cys224–Cys270, Cys269–Cys277, Cys289–Cys303, Cys302–Cys313, Cys340–Cys385, and Cys384–Cys393. Asn109 carries N-linked (GlcNAc...) asparagine glycosylation. Residue Asn153 is glycosylated (N-linked (GlcNAc...) asparagine). Positions 215 to 319 (ALSSYQRNVC…RADCIINANK (105 aa)) are binding pocket for hydrophobic ligands. An N-linked (GlcNAc...) asparagine glycan is attached at Asn402. Cystine bridges form between Cys416-Cys462, Cys461-Cys470, Cys483-Cys499, Cys498-Cys509, and Cys580-Cys589. Residue Asn488 is glycosylated (N-linked (GlcNAc...) asparagine). The tract at residues 585-608 (KPEACFSPESSKTGDVSQDAEKQR) is disordered.

This sequence belongs to the ALB/AFP/VDB family. In terms of assembly, forms a 1:1 complex with Wnt family members; interacts with WNT1, WNT2B, WNT3, WNT3A, WNT5A, WNT7A, WNT7B, WNT8, WNT9A, WNT9B, WNT10A and WNT10B. Post-translationally, N-glycosylated; more than 90% of the glycans are sialylated.

The protein resides in the secreted. Functionally, functions as a carrier for hydrophobic molecules in body fluids. Essential for the solubility and activity of lipidated Wnt family members, including WNT1, WNT2B, WNT3, WNT3A, WNT5A, WNT7A, WNT7B, WNT8, WNT9A, WNT9B, WNT10A and WNT10B. Binds vitamin E. May transport vitamin E in body fluids under conditions where the lipoprotein system is not sufficient. May be involved in the transport of vitamin E across the blood-brain barrier. This Rattus norvegicus (Rat) protein is Afamin (Afm).